Consider the following 216-residue polypeptide: Probable transaldolase (216 aa).

Lys-83 acts as the Schiff-base intermediate with substrate in catalysis.

The protein belongs to the transaldolase family. Type 3B subfamily.

Its subcellular location is the cytoplasm. It carries out the reaction D-sedoheptulose 7-phosphate + D-glyceraldehyde 3-phosphate = D-erythrose 4-phosphate + beta-D-fructose 6-phosphate. Its pathway is carbohydrate degradation; pentose phosphate pathway; D-glyceraldehyde 3-phosphate and beta-D-fructose 6-phosphate from D-ribose 5-phosphate and D-xylulose 5-phosphate (non-oxidative stage): step 2/3. Functionally, transaldolase is important for the balance of metabolites in the pentose-phosphate pathway. The protein is Probable transaldolase of Desulforamulus reducens (strain ATCC BAA-1160 / DSM 100696 / MI-1) (Desulfotomaculum reducens).